A 208-amino-acid chain; its full sequence is Interleukin-6 (208 aa).

Positions 1 to 29 (MNSRFTSAFTPFAVSLGLLLVMTSAFPTP) are cleaved as a signal peptide. The N-linked (GlcNAc...) asparagine glycan is linked to Asn38. Cys72 and Cys78 are oxidised to a cystine. Ser81 carries the phosphoserine modification. Cys101 and Cys111 form a disulfide bridge.

This sequence belongs to the IL-6 superfamily. Component of a hexamer of two molecules each of IL6, IL6R and IL6ST; first binds to IL6R to associate with the signaling subunit IL6ST. Interacts with IL6R (via the N-terminal ectodomain); this interaction may be affected by IL6R-binding with SORL1, hence decreasing IL6 cis signaling. Interacts with SORL1 (via the N-terminal ectodomain); this interaction leads to IL6 internalization and lysosomal degradation. May form a trimeric complex with the soluble SORL1 ectodomain and soluble IL6R receptor; this interaction might stabilize circulating IL6, hence promoting IL6 trans signaling.

Its subcellular location is the secreted. In terms of biological role, cytokine with a wide variety of biological functions in immunity, tissue regeneration, and metabolism. Binds to IL6R, then the complex associates to the signaling subunit IL6ST/gp130 to trigger the intracellular IL6-signaling pathway. The interaction with the membrane-bound IL6R and IL6ST stimulates 'classic signaling', whereas the binding of IL6 and soluble IL6R to IL6ST stimulates 'trans-signaling'. Alternatively, 'cluster signaling' occurs when membrane-bound IL6:IL6R complexes on transmitter cells activate IL6ST receptors on neighboring receiver cells. Functionally, IL6 is a potent inducer of the acute phase response. Rapid production of IL6 contributes to host defense during infection and tissue injury, but excessive IL6 synthesis is involved in disease pathology. In the innate immune response, is synthesized by myeloid cells, such as macrophages and dendritic cells, upon recognition of pathogens through toll-like receptors (TLRs) at the site of infection or tissue injury. In the adaptive immune response, is required for the differentiation of B cells into immunoglobulin-secreting cells. Plays a major role in the differentiation of CD4(+) T cell subsets. Essential factor for the development of T follicular helper (Tfh) cells that are required for the induction of germinal-center formation. Required to drive naive CD4(+) T cells to the Th17 lineage. Also required for proliferation of myeloma cells and the survival of plasmablast cells. Acts as an essential factor in bone homeostasis and on vessels directly or indirectly by induction of VEGF, resulting in increased angiogenesis activity and vascular permeability. Induces, through 'trans-signaling' and synergistically with IL1B and TNF, the production of VEGF. Involved in metabolic controls, is discharged into the bloodstream after muscle contraction increasing lipolysis and improving insulin resistance. 'Trans-signaling' in central nervous system also regulates energy and glucose homeostasis. Mediates, through GLP-1, crosstalk between insulin-sensitive tissues, intestinal L cells and pancreatic islets to adapt to changes in insulin demand. Also acts as a myokine. Plays a protective role during liver injury, being required for maintenance of tissue regeneration. Also has a pivotal role in iron metabolism by regulating HAMP/hepcidin expression upon inflammation or bacterial infection. Through activation of IL6ST-YAP-NOTCH pathway, induces inflammation-induced epithelial regeneration. This chain is Interleukin-6 (IL6), found in Bos taurus (Bovine).